The following is a 151-amino-acid chain: Large ribosomal subunit protein uL13 (151 aa).

This sequence belongs to the universal ribosomal protein uL13 family. Part of the 50S ribosomal subunit.

In terms of biological role, this protein is one of the early assembly proteins of the 50S ribosomal subunit, although it is not seen to bind rRNA by itself. It is important during the early stages of 50S assembly. This Microchaete diplosiphon (Fremyella diplosiphon) protein is Large ribosomal subunit protein uL13.